The chain runs to 240 residues: Probable septum site-determining protein MinC (240 aa).

It belongs to the MinC family. Interacts with MinD and FtsZ.

Its function is as follows. Cell division inhibitor that blocks the formation of polar Z ring septums. Rapidly oscillates between the poles of the cell to destabilize FtsZ filaments that have formed before they mature into polar Z rings. Prevents FtsZ polymerization. The protein is Probable septum site-determining protein MinC of Aeromonas hydrophila subsp. hydrophila (strain ATCC 7966 / DSM 30187 / BCRC 13018 / CCUG 14551 / JCM 1027 / KCTC 2358 / NCIMB 9240 / NCTC 8049).